The chain runs to 118 residues: NADH-quinone oxidoreductase subunit A 2 (118 aa).

A run of 3 helical transmembrane segments spans residues 5–25 (YLPI…SLVF), 60–80 (FYII…LYPW), and 87–107 (LGMF…VGYI).

Belongs to the complex I subunit 3 family. As to quaternary structure, NDH-1 is composed of 14 different subunits. Subunits NuoA, H, J, K, L, M, N constitute the membrane sector of the complex.

It is found in the cell inner membrane. It catalyses the reaction a quinone + NADH + 5 H(+)(in) = a quinol + NAD(+) + 4 H(+)(out). Functionally, NDH-1 shuttles electrons from NADH, via FMN and iron-sulfur (Fe-S) centers, to quinones in the respiratory chain. The immediate electron acceptor for the enzyme in this species is believed to be ubiquinone. Couples the redox reaction to proton translocation (for every two electrons transferred, four hydrogen ions are translocated across the cytoplasmic membrane), and thus conserves the redox energy in a proton gradient. The polypeptide is NADH-quinone oxidoreductase subunit A 2 (Geobacter metallireducens (strain ATCC 53774 / DSM 7210 / GS-15)).